The sequence spans 161 residues: DNA endonuclease I-CvuI (161 aa).

This sequence belongs to the LAGLIDADG endonuclease family.

The protein localises to the plastid. It is found in the chloroplast. Its function is as follows. Probable endonuclease involved in intron homing. This chain is DNA endonuclease I-CvuI, found in Chlorella vulgaris (Green alga).